The chain runs to 277 residues: MAIKKYKPTSNGRRGMTTSDFAEITTDKPEKSLLAPLHRKGGRNNQGRLTVRHQGGGHKRQYRIIDFKRDKDGIPGRVATIEYDPNRSANIALVNYADGEKRYILAPKGIQVGTEVTSGPEADIKPGNALPLINIPVGTVVHNIELKPGKGGQLVRSAGTSAQVLGKEGKYVLVRLNSGEVRMILSACRATIGQVGNEQHELINIGKAGRSRWKGVRPTVRGSVMNPNDHPHGGGEGRAPIGRKSPMSPWGKPTLGFKTRKKTNKSDKFIVRRRKNK.

Disordered regions lie at residues 38-58 (HRKG…GGGH) and 219-277 (TVRG…RKNK).

It belongs to the universal ribosomal protein uL2 family. Part of the 50S ribosomal subunit. Forms a bridge to the 30S subunit in the 70S ribosome.

In terms of biological role, one of the primary rRNA binding proteins. Required for association of the 30S and 50S subunits to form the 70S ribosome, for tRNA binding and peptide bond formation. It has been suggested to have peptidyltransferase activity; this is somewhat controversial. Makes several contacts with the 16S rRNA in the 70S ribosome. This Bacillus pumilus (strain SAFR-032) protein is Large ribosomal subunit protein uL2.